The following is a 385-amino-acid chain: Homoserine O-succinyltransferase (385 aa).

Residues 45–355 (NAVLVCHALN…SHGHDAFLLD (311 aa)) form the AB hydrolase-1 domain. Serine 151 acts as the Nucleophile in catalysis. Arginine 221 is a substrate binding site. Residues aspartate 316 and histidine 349 contribute to the active site. Position 350 (aspartate 350) interacts with substrate.

Belongs to the AB hydrolase superfamily. MetX family. In terms of assembly, homodimer.

It is found in the cytoplasm. It carries out the reaction L-homoserine + succinyl-CoA = O-succinyl-L-homoserine + CoA. Its pathway is amino-acid biosynthesis; L-methionine biosynthesis via de novo pathway; O-succinyl-L-homoserine from L-homoserine: step 1/1. Its function is as follows. Transfers a succinyl group from succinyl-CoA to L-homoserine, forming succinyl-L-homoserine. This is Homoserine O-succinyltransferase from Herminiimonas arsenicoxydans.